A 5054-amino-acid chain; its full sequence is Malformin synthetase mlfA (5054 aa).

Positions 194 to 585 are adenylation 1; the sequence is ERRAANRPHS…CGRADTQVKL (392 aa). A Carrier 1 domain is found at 723–799; that stretch reads LGLSQLEQEI…EASSLAEVQE (77 aa). Ser760 is modified (O-(pantetheine 4'-phosphoryl)serine). Positions 837-1268 are condensation 1; sequence EDVFPCTTMQ…ALNTLTLLQA (432 aa). Residues 1296-1685 are adenylation 2; that stretch reads DRWVTRQPES…GRKDTQVKLR (390 aa). The 78-residue stretch at 1823–1900 folds into the Carrier 2 domain; sequence TASSKLELTL…QLAAILGEAT (78 aa). Ser1860 carries the post-translational modification O-(pantetheine 4'-phosphoryl)serine. Disordered stretches follow at residues 1899-1929 and 1964-1994; these read ATGQ…NDGV and GSSS…VSPV. Low complexity-rich tracts occupy residues 1904–1927 and 1965–1981; these read ESSA…STND and SSSC…SSSS. The segment at 2033 to 2448 is condensation 2; sequence EDIYPATALQ…GVSYRDKQTL (416 aa). Residues 2471–2863 are adenylation 3; the sequence is VRTPHAPAVF…IGRRDGQLKL (393 aa). The 77-residue stretch at 2999–3075 folds into the Carrier 3 domain; it reads RPATAQEREM…QLMRHLSANG (77 aa). The residue at position 3036 (Ser3036) is an O-(pantetheine 4'-phosphoryl)serine. Condensation stretches follow at residues 3092-3557 and 3578-3997; these read WVPL…TYDQ and DIYP…EQLV. Residues 4022-4412 form an adenylation 4 region; sequence HSSREAACAW…VGRKDNQIKF (391 aa). Residues 4546 to 4622 enclose the Carrier 4 domain; the sequence is MPFTAAECKM…DLAYRTANLV (77 aa). Ser4583 carries the post-translational modification O-(pantetheine 4'-phosphoryl)serine. The condensation 5 stretch occupies residues 4659 to 4972; sequence EVLPTTSFQR…LQTIVQHQNN (314 aa).

The protein belongs to the NRP synthetase family.

It functions in the pathway secondary metabolite biosynthesis. Nonribosomal peptide synthetase; part of the gene cluster that mediates the biosynthesis of malformins, cyclic pentapeptides with a disulfide bond between 2 consecutive cysteins, that show potential anti-tumor as well as antimalarial and antitrypanosomal properties. The nonribosomal peptide synthetase mlfA is responsible of the formation of the cyclic pentapeptide. The malformin biosynthesis clusters in malformin-producing fungi also contain enzymes involved in the formation of the disulfide bond between the two consecutive cysteins within malformins, in addition to additional tailoring enzymes such as methyltransferases or oxidoreductases. They are also composed of up to 4 major facilitator superfamily transporters, and transcription factors probably involved in the regulation of the expression of those clusters. The sequence is that of Malformin synthetase mlfA from Aspergillus niger (strain ATCC MYA-4892 / CBS 513.88 / FGSC A1513).